Consider the following 197-residue polypeptide: Peptide deformylase (197 aa).

Positions 106 and 148 each coordinate Fe cation. Glu149 is a catalytic residue. Position 152 (His152) interacts with Fe cation.

The protein belongs to the polypeptide deformylase family. It depends on Fe(2+) as a cofactor.

The catalysed reaction is N-terminal N-formyl-L-methionyl-[peptide] + H2O = N-terminal L-methionyl-[peptide] + formate. Removes the formyl group from the N-terminal Met of newly synthesized proteins. Requires at least a dipeptide for an efficient rate of reaction. N-terminal L-methionine is a prerequisite for activity but the enzyme has broad specificity at other positions. The polypeptide is Peptide deformylase (Mycobacterium leprae (strain TN)).